A 66-amino-acid polypeptide reads, in one-letter code: DNA-directed RNA polymerase subunit Rpo10 (66 aa).

Positions 7, 10, 44, and 45 each coordinate Zn(2+).

This sequence belongs to the archaeal Rpo10/eukaryotic RPB10 RNA polymerase subunit family. In terms of assembly, part of the RNA polymerase complex. Zn(2+) is required as a cofactor.

The protein resides in the cytoplasm. The enzyme catalyses RNA(n) + a ribonucleoside 5'-triphosphate = RNA(n+1) + diphosphate. Functionally, DNA-dependent RNA polymerase (RNAP) catalyzes the transcription of DNA into RNA using the four ribonucleoside triphosphates as substrates. The polypeptide is DNA-directed RNA polymerase subunit Rpo10 (Saccharolobus islandicus (strain Y.N.15.51 / Yellowstone #2) (Sulfolobus islandicus)).